Here is a 303-residue protein sequence, read N- to C-terminus: Glutathione transport system permease protein GsiD (303 aa).

Helical transmembrane passes span 40–60 (AMTA…ARWI), 105–125 (LAAG…LGLL), 144–164 (LFAF…GSGI), 165–185 (ANVI…LVRG), 222–242 (IVVF…SLSF), and 266–286 (VIAP…VLAF). In terms of domain architecture, ABC transmembrane type-1 spans 101-290 (AQISLAAGVF…LTVLAFNLLG (190 aa)).

The protein belongs to the binding-protein-dependent transport system permease family. The complex is composed of two ATP-binding proteins (GsiA), two transmembrane proteins (GsiC and GsiD) and a solute-binding protein (GsiB).

The protein resides in the cell inner membrane. Its function is as follows. Part of the ABC transporter complex GsiABCD involved in glutathione import. Probably responsible for the translocation of the substrate across the membrane. This is Glutathione transport system permease protein GsiD from Escherichia coli O1:K1 / APEC.